The chain runs to 286 residues: Soluble epoxide hydrolase (286 aa).

Residues 26–123 (YPLVLLHGWP…DLVERLFILD (98 aa)) enclose the AB hydrolase-1 domain. Asp99 (nucleophile) is an active-site residue. Tyr209 acts as the Proton donor in catalysis. Residue His264 is the Proton acceptor of the active site.

The protein belongs to the AB hydrolase superfamily. Epoxide hydrolase family. As to quaternary structure, homotetramer.

Its subcellular location is the cytoplasm. The protein resides in the cell membrane. It catalyses the reaction an epoxide + H2O = an ethanediol. Its function is as follows. Involved in catabolic degradation of epoxides. Shows highest activity towards C6 and C7 carbocyclic epoxides. Also active towards linear 1,2-epoxyalkanes. This is Soluble epoxide hydrolase from Corynebacterium sp. (strain C12).